Reading from the N-terminus, the 154-residue chain is Snaclec lebecin subunit beta (154 aa).

The first 23 residues, Met-1–Ala-23, serve as a signal peptide directing secretion. 3 cysteine pairs are disulfide-bonded: Cys-25-Cys-36, Cys-53-Cys-150, and Cys-125-Cys-142. The region spanning Asp-32 to Lys-151 is the C-type lectin domain. Asn-139 carries an N-linked (GlcNAc...) asparagine glycan.

In terms of assembly, heterodimer with the alpha subunit (AC W5XDM0); disulfide-linked. As to expression, expressed by the venom gland.

It is found in the secreted. Its function is as follows. Inhibits human breast cancer cells (MDA-MB231) migration and proliferation, as well as their adhesion to fibrinogen and fibronectin. This inhibition may be due to the binding to receptors of the integrin family, probably alpha-v/beta-3 (ITGAV/ITGB3) (40% inhibition of cell adhesion) and alpha-5/beta-1 (ITGA5/ITGB1) (by comparison with lebectin). The chain is Snaclec lebecin subunit beta from Macrovipera lebetinus (Levantine viper).